Here is a 591-residue protein sequence, read N- to C-terminus: Aspartate--tRNA(Asp/Asn) ligase (591 aa).

Glu174 is an L-aspartate binding site. Residues 198 to 201 (QLFK) form an aspartate region. Residue Arg220 participates in L-aspartate binding. ATP contacts are provided by residues 220–222 (RDE) and Gln229. His450 contacts L-aspartate. Glu483 is an ATP binding site. Position 490 (Arg490) interacts with L-aspartate. 535 to 538 (GLDR) is an ATP binding site.

This sequence belongs to the class-II aminoacyl-tRNA synthetase family. Type 1 subfamily. As to quaternary structure, homodimer.

It is found in the cytoplasm. The catalysed reaction is tRNA(Asx) + L-aspartate + ATP = L-aspartyl-tRNA(Asx) + AMP + diphosphate. Aspartyl-tRNA synthetase with relaxed tRNA specificity since it is able to aspartylate not only its cognate tRNA(Asp) but also tRNA(Asn). Reaction proceeds in two steps: L-aspartate is first activated by ATP to form Asp-AMP and then transferred to the acceptor end of tRNA(Asp/Asn). The polypeptide is Aspartate--tRNA(Asp/Asn) ligase (Pseudomonas putida (strain W619)).